The following is a 317-amino-acid chain: Acetyl-coenzyme A carboxylase carboxyl transferase subunit alpha (317 aa).

The region spanning 33–294 (NINKEINCLR…KNRILKDLKE (262 aa)) is the CoA carboxyltransferase C-terminal domain.

Belongs to the AccA family. In terms of assembly, acetyl-CoA carboxylase is a heterohexamer composed of biotin carboxyl carrier protein (AccB), biotin carboxylase (AccC) and two subunits each of ACCase subunit alpha (AccA) and ACCase subunit beta (AccD).

The protein localises to the cytoplasm. It catalyses the reaction N(6)-carboxybiotinyl-L-lysyl-[protein] + acetyl-CoA = N(6)-biotinyl-L-lysyl-[protein] + malonyl-CoA. The protein operates within lipid metabolism; malonyl-CoA biosynthesis; malonyl-CoA from acetyl-CoA: step 1/1. In terms of biological role, component of the acetyl coenzyme A carboxylase (ACC) complex. First, biotin carboxylase catalyzes the carboxylation of biotin on its carrier protein (BCCP) and then the CO(2) group is transferred by the carboxyltransferase to acetyl-CoA to form malonyl-CoA. The sequence is that of Acetyl-coenzyme A carboxylase carboxyl transferase subunit alpha from Wigglesworthia glossinidia brevipalpis.